Reading from the N-terminus, the 758-residue chain is Calpain (758 aa).

In terms of domain architecture, Calpain catalytic spans 99–397 (LWEDPDFPAN…FSRVEVCHLG (299 aa)). Active-site residues include Cys154, His313, and Asn337. The segment at 398–562 (LESLEYNQNF…TSITEQELDE (165 aa)) is domain III. The linker stretch occupies residues 563 to 582 (DNTNQGLPDDVIEALKLEDT). Residues 583–757 (LLDEDQEIEQ…AEDYLRFSVY (175 aa)) form a domain IV region. The Ca(2+) site is built by Asp641, Asn643, Thr645, His647, Glu652, Asp671, Asp673, Ser675, Tyr677, and Glu682. 2 consecutive EF-hand domains span residues 658-693 (IQAKGWKHIFIKHDVDQSGYFSAYEFREALNDAGYH) and 694-729 (VSNRLINAIINRYQDPGTDKISFEDFMLCMVRLKTA).

Belongs to the peptidase C2 family.

With respect to regulation, activated by free cytoplasmic calcium. Calpains are calcium-activated non-lysosomal thiol-proteases. The polypeptide is Calpain (Schistosoma mansoni (Blood fluke)).